The following is a 126-amino-acid chain: Aspartate 1-decarboxylase (126 aa).

Residue Ser25 is the Schiff-base intermediate with substrate; via pyruvic acid of the active site. Ser25 carries the post-translational modification Pyruvic acid (Ser). Substrate is bound at residue Thr57. Residue Tyr58 is the Proton donor of the active site. 73–75 (GGA) lines the substrate pocket.

The protein belongs to the PanD family. As to quaternary structure, heterooctamer of four alpha and four beta subunits. Pyruvate is required as a cofactor. Post-translationally, is synthesized initially as an inactive proenzyme, which is activated by self-cleavage at a specific serine bond to produce a beta-subunit with a hydroxyl group at its C-terminus and an alpha-subunit with a pyruvoyl group at its N-terminus.

Its subcellular location is the cytoplasm. It carries out the reaction L-aspartate + H(+) = beta-alanine + CO2. The protein operates within cofactor biosynthesis; (R)-pantothenate biosynthesis; beta-alanine from L-aspartate: step 1/1. Catalyzes the pyruvoyl-dependent decarboxylation of aspartate to produce beta-alanine. This is Aspartate 1-decarboxylase from Xylella fastidiosa (strain 9a5c).